Reading from the N-terminus, the 182-residue chain is CASP-like protein 5A1 (182 aa).

The Cytoplasmic segment spans residues 1–47 (MEMASHPAVHPVALPPPYQAVGPPAPPAVRINDFPGSPGTLMGLALR). A helical membrane pass occupies residues 48-68 (FAQLGFALTALCIMVSIVGFS). Residues 69-72 (SVTA) are Extracellular-facing. A helical membrane pass occupies residues 73–93 (FCFLVAAMVLQCIWSLCLGVL). Topologically, residues 94–117 (DCYALLTKRSLRNSLILSFFVVGD) are cytoplasmic. Residues 118–138 (WITSTMTFAGACAAAGITVLI) traverse the membrane as a helical segment. Residues 139–158 (DNDLNQCGPNHCNRFEAAAA) are Extracellular-facing. A helical transmembrane segment spans residues 159–179 (MAFMSWVITTISFFLSFWILV). Topologically, residues 180 to 182 (TCR) are cytoplasmic.

This sequence belongs to the Casparian strip membrane proteins (CASP) family. Homodimer and heterodimers.

The protein resides in the cell membrane. The protein is CASP-like protein 5A1 of Physcomitrium patens (Spreading-leaved earth moss).